A 196-amino-acid chain; its full sequence is ATP-dependent Clp protease proteolytic subunit (196 aa).

Catalysis depends on serine 101, which acts as the Nucleophile. Histidine 126 is an active-site residue.

It belongs to the peptidase S14 family. Component of the chloroplastic Clp protease core complex.

The protein resides in the plastid. The protein localises to the chloroplast stroma. The catalysed reaction is Hydrolysis of proteins to small peptides in the presence of ATP and magnesium. alpha-casein is the usual test substrate. In the absence of ATP, only oligopeptides shorter than five residues are hydrolyzed (such as succinyl-Leu-Tyr-|-NHMec, and Leu-Tyr-Leu-|-Tyr-Trp, in which cleavage of the -Tyr-|-Leu- and -Tyr-|-Trp bonds also occurs).. Functionally, cleaves peptides in various proteins in a process that requires ATP hydrolysis. Has a chymotrypsin-like activity. Plays a major role in the degradation of misfolded proteins. This chain is ATP-dependent Clp protease proteolytic subunit, found in Panax ginseng (Korean ginseng).